The following is a 421-amino-acid chain: Nacrein-like protein M (421 aa).

Asn-27 carries N-linked (GlcNAc...) asparagine glycosylation. The Alpha-carbonic anhydrase domain occupies 33–420 (AGFSYDRSIC…KNKVTVYKSF (388 aa)). The Zn(2+) site is built by His-132, His-134, and His-157. Residues 197-206 (DGFGDEPDDE) show a composition bias toward acidic residues. Residues 197 to 303 (DGFGDEPDDE…GENGHKHGCR (107 aa)) form a disordered region. Over residues 207 to 219 (ECKRILKGHHPDN) the composition is skewed to basic and acidic residues. Residues 220–295 (NENGNGDNGN…NNGDNGNNGE (76 aa)) show a composition bias toward low complexity. 24 tandem repeats follow at residues 225–227 (GDN), 228–230 (GNN), 231–233 (GYN), 234–236 (GDN), 237–239 (GNN), 240–242 (GDN), 243–245 (GNN), 246–248 (GYN), 249–251 (GDN), 252–254 (GNN), 255–257 (GDN), 258–260 (GNN), 261–263 (GYN), 264–266 (GDN), 267–269 (GNN), 270–272 (GDN), 273–275 (GNN), 276–278 (GEN), 279–281 (GNN), 282–284 (GEN), 285–287 (GNN), 288–290 (GDN), 291–292 (GN), and 294–296 (GEN). Residues 225–296 (GDNGNNGYNG…NGDNGNNGEN (72 aa)) form a 24 X 3 AA approximate tandem repeats of G-X-N region. 361-362 (TT) contacts substrate.

This sequence belongs to the alpha-carbonic anhydrase family. As to quaternary structure, homooligomer; disulfide-linked. May also be disulfide-linked to insoluble organic matrix. Zn(2+) is required as a cofactor. In terms of tissue distribution, expressed in the mantle.

The protein resides in the secreted. It localises to the extracellular space. Its subcellular location is the extracellular matrix. The enzyme catalyses hydrogencarbonate + H(+) = CO2 + H2O. Acts as a negative regulator for calcification in the shells of mollusks. May function both as a calcium concentrator and as a carbonic anhydrase required for production of carbonate ions, which are assembled to CaCO(3) at mineralization sites. Is important for shell formation in both the calcitic prismatic layer and the aragonitic nacreous layerr. Shows inhibitory activity of crystal formation when present in free state but, when attached to the insoluble matrix, may regulate the form and size of aragonite crystal. This is Nacrein-like protein M from Pinctada maxima (Silver-lipped pearl oyster).